The chain runs to 603 residues: Arginine--tRNA ligase (603 aa).

Residues 143–153 carry the 'HIGH' region motif; it reads PNIAKEMHVGH.

This sequence belongs to the class-I aminoacyl-tRNA synthetase family. Monomer.

It is found in the cytoplasm. It carries out the reaction tRNA(Arg) + L-arginine + ATP = L-arginyl-tRNA(Arg) + AMP + diphosphate. This Prochlorococcus marinus (strain SARG / CCMP1375 / SS120) protein is Arginine--tRNA ligase.